The chain runs to 621 residues: Transmembrane protein 200C (621 aa).

Residues 12–37 form a disordered region; it reads ARKQDPLRPPSQIPKRKRKAKKRRKN. A compositionally biased stretch (basic residues) spans 25-36; it reads PKRKRKAKKRRK. Residues 53-73 form a helical membrane-spanning segment; sequence GLIALCGILVLLVGIAMAVVG. A disordered region spans residues 80–147; sequence GTNREGGKQL…RAASPSSSST (68 aa). A compositionally biased stretch (low complexity) spans 125–147; the sequence is SSSAGAPRSTPPARAASPSSSST. Residues 167–187 traverse the membrane as a helical segment; sequence VFGPLIMGIGIFLFICANAVL. Disordered regions lie at residues 284 to 315, 347 to 368, and 384 to 598; these read WPPH…PREP, ASSC…QSTA, and LQGG…FTNK. Residues 290 to 303 are compositionally biased toward low complexity; it reads APSGGRPRGAASPP. Basic and acidic residues predominate over residues 405-418; sequence PGERGSQEIPRGEL. Residues 479-490 are compositionally biased toward pro residues; the sequence is RAPPSPEPPPSP. Composition is skewed to low complexity over residues 491–505 and 523–533; these read GSAD…KAAS and GSSQSDDPSSS. Positions 586–595 are enriched in polar residues; it reads EQPQPVQRQF.

The protein belongs to the TMEM200 family.

It is found in the membrane. The chain is Transmembrane protein 200C (TMEM200C) from Homo sapiens (Human).